The primary structure comprises 351 residues: Porphobilinogen deaminase (351 aa).

At Cys-242 the chain carries S-(dipyrrolylmethanemethyl)cysteine.

This sequence belongs to the HMBS family. Monomer. Requires dipyrromethane as cofactor.

The catalysed reaction is 4 porphobilinogen + H2O = hydroxymethylbilane + 4 NH4(+). The protein operates within porphyrin-containing compound metabolism; protoporphyrin-IX biosynthesis; coproporphyrinogen-III from 5-aminolevulinate: step 2/4. Its function is as follows. Tetrapolymerization of the monopyrrole PBG into the hydroxymethylbilane pre-uroporphyrinogen in several discrete steps. In Rickettsia africae (strain ESF-5), this protein is Porphobilinogen deaminase.